The sequence spans 979 residues: Mast/stem cell growth factor receptor Kit (979 aa).

Positions 1–27 (MRGARGAWDFLCVLLLLLLLGVQTGSS) are cleaved as a signal peptide. Residues 28–527 (QPSVSPGEPS…QIHPHTLFTP (500 aa)) are Extracellular-facing. 5 consecutive Ig-like C2-type domains span residues 29–114 (PSVS…VFVR), 123–207 (DLPL…LKVR), 214–311 (PVVS…LEVV), 320–413 (PMMS…VYVN), and 416–510 (PEIL…FNFA). The cysteines at positions 60 and 99 are disulfide-linked. Residues Asn-96, Asn-132, and Asn-147 are each glycosylated (N-linked (GlcNAc...) asparagine). Disulfide bonds link Cys-138-Cys-188, Cys-153-Cys-185, and Cys-235-Cys-293. N-linked (GlcNAc...) asparagine glycans are attached at residues Asn-286, Asn-296, Asn-303, Asn-355, Asn-370, Asn-403, Asn-466, and Asn-489. Cys-431 and Cys-494 are oxidised to a cystine. A helical membrane pass occupies residues 528 to 548 (LLIGFVIAAGMMCIIVMILTY). The Cytoplasmic portion of the chain corresponds to 549–979 (KYLQKPMYEV…TQPLLVHEDV (431 aa)). Phosphotyrosine; by autocatalysis is present on residues Tyr-550, Tyr-556, Tyr-571, and Tyr-573. Tyr-571 contacts Mg(2+). The segment at 571–573 (YVY) is important for interaction with phosphotyrosine-binding proteins. Residues 592 to 940 (LSFGKTLGAG…ISDSTNHIYS (349 aa)) form the Protein kinase domain. ATP-binding positions include 599-606 (GAGAFGKV), Lys-626, and 674-680 (EYCCYGD). 3 positions are modified to phosphotyrosine; by autocatalysis: Tyr-706, Tyr-724, and Tyr-733. A phosphoserine; by PKC/PRKCA mark is found at Ser-744 and Ser-749. Residue Asp-795 is the Proton acceptor of the active site. Arg-799 contacts ATP. Residues Asn-800 and Asp-813 each contribute to the Mg(2+) site. Ser-824 carries the phosphoserine modification. Tyr-826 bears the Phosphotyrosine; by autocatalysis mark. Ser-894 bears the Phosphoserine mark. Phosphotyrosine; by autocatalysis occurs at positions 903 and 939. A Phosphoserine modification is found at Ser-962.

The protein belongs to the protein kinase superfamily. Tyr protein kinase family. CSF-1/PDGF receptor subfamily. In terms of assembly, monomer in the absence of bound KITLG/SCF. Homodimer in the presence of bound KITLG/SCF, forming a heterotetramer with two KITLG/SCF molecules. Interacts (via phosphorylated tyrosine residues) with the adapter proteins GRB2 and GRB7 (via SH2 domain), and SH2B2/APS. Interacts (via C-terminus) with MPDZ (via the tenth PDZ domain). Interacts (via phosphorylated tyrosine residues) with PIK3R1 and PIK3 catalytic subunit. Interacts (via phosphorylated tyrosine) with CRK (isoform Crk-II), FYN, SHC1 and MATK/CHK (via SH2 domain). Interacts with LYN and FES/FPS. Interacts (via phosphorylated tyrosine residues) with the protein phosphatases PTPN6/SHP-1 (via SH2 domain), PTPN11/SHP-2 (via SH2 domain) and PTPRU. Interacts with PLCG1. Interacts with DOK1 and TEC. Interacts with IL1RAP (independent of stimulation with KITLG/SCF). A mast cell-specific KITLG/SCF-induced interleukin-33 signaling complex contains IL1RL1, IL1RAP, KIT and MYD88. Post-translationally, ubiquitinated by SOCS6. KIT is rapidly ubiquitinated after autophosphorylation induced by KITLG/SCF binding, leading to internalization and degradation. Autophosphorylated on tyrosine residues. KITLG/SCF binding promotes autophosphorylation. Phosphorylated tyrosine residues are important for interaction with specific binding partners.

The protein localises to the cell membrane. The catalysed reaction is L-tyrosyl-[protein] + ATP = O-phospho-L-tyrosyl-[protein] + ADP + H(+). Its activity is regulated as follows. Present in an inactive conformation in the absence of bound ligand. KITLG/SCF binding leads to dimerization and activation by autophosphorylation on tyrosine residues. Activity is down-regulated by PRKCA-mediated phosphorylation on serine residues. In terms of biological role, tyrosine-protein kinase that acts as a cell-surface receptor for the cytokine KITLG/SCF and plays an essential role in the regulation of cell survival and proliferation, hematopoiesis, stem cell maintenance, gametogenesis, mast cell development, migration and function, and in melanogenesis. In response to KITLG/SCF binding, KIT can activate several signaling pathways. Phosphorylates PIK3R1, PLCG1, SH2B2/APS and CBL. Activates the AKT1 signaling pathway by phosphorylation of PIK3R1, the regulatory subunit of phosphatidylinositol 3-kinase. Activated KIT also transmits signals via GRB2 and activation of RAS, RAF1 and the MAP kinases MAPK1/ERK2 and/or MAPK3/ERK1. Promotes activation of STAT family members STAT1, STAT3, STAT5A and STAT5B. Activation of PLCG1 leads to the production of the cellular signaling molecules diacylglycerol and inositol 1,4,5-trisphosphate. KIT signaling is modulated by protein phosphatases, and by rapid internalization and degradation of the receptor. Activated KIT promotes phosphorylation of the protein phosphatases PTPN6/SHP-1 and PTPRU, and of the transcription factors STAT1, STAT3, STAT5A and STAT5B. Promotes phosphorylation of PIK3R1, CBL, CRK (isoform Crk-II), LYN, MAPK1/ERK2 and/or MAPK3/ERK1, PLCG1, SRC and SHC1. This Canis lupus familiaris (Dog) protein is Mast/stem cell growth factor receptor Kit (KIT).